We begin with the raw amino-acid sequence, 722 residues long: Ribosomal RNA large subunit methyltransferase K/L (722 aa).

The region spanning 43-154 (IGLRACLWSR…GNEGRVGIDL (112 aa)) is the THUMP domain.

This sequence belongs to the methyltransferase superfamily. RlmKL family.

The protein localises to the cytoplasm. The catalysed reaction is guanosine(2445) in 23S rRNA + S-adenosyl-L-methionine = N(2)-methylguanosine(2445) in 23S rRNA + S-adenosyl-L-homocysteine + H(+). The enzyme catalyses guanosine(2069) in 23S rRNA + S-adenosyl-L-methionine = N(2)-methylguanosine(2069) in 23S rRNA + S-adenosyl-L-homocysteine + H(+). In terms of biological role, specifically methylates the guanine in position 2445 (m2G2445) and the guanine in position 2069 (m7G2069) of 23S rRNA. The polypeptide is Ribosomal RNA large subunit methyltransferase K/L (Magnetococcus marinus (strain ATCC BAA-1437 / JCM 17883 / MC-1)).